Here is an 85-residue protein sequence, read N- to C-terminus: Large ribosomal subunit protein bL27 (85 aa).

This sequence belongs to the bacterial ribosomal protein bL27 family.

The chain is Large ribosomal subunit protein bL27 from Vesicomyosocius okutanii subsp. Calyptogena okutanii (strain HA).